Here is a 111-residue protein sequence, read N- to C-terminus: MSRRPNFGGMGMGGMNMQQMMKQAKKLQAQMAEEQENITAQEFVGKSADDLVVATFSGDRKLKDIKIDKDTIDPDDPDMLQDLIIDAVNKGLSQIDEATQASLGKYTKGLM.

Belongs to the YbaB/EbfC family. In terms of assembly, homodimer.

It is found in the cytoplasm. It localises to the nucleoid. Functionally, binds to DNA and alters its conformation. May be involved in regulation of gene expression, nucleoid organization and DNA protection. This is Nucleoid-associated protein LBA0378 from Lactobacillus acidophilus (strain ATCC 700396 / NCK56 / N2 / NCFM).